A 285-amino-acid chain; its full sequence is NADPH-dependent 7-cyano-7-deazaguanine reductase (285 aa).

Residue Ile91–Ser93 coordinates substrate. NADPH is bound at residue Ser93–Lys94. Cys191 acts as the Thioimide intermediate in catalysis. Asp198 (proton donor) is an active-site residue. His230 to Glu231 is a substrate binding site. Arg259–Gly260 is a binding site for NADPH.

This sequence belongs to the GTP cyclohydrolase I family. QueF type 2 subfamily. Homodimer.

It is found in the cytoplasm. It catalyses the reaction 7-aminomethyl-7-carbaguanine + 2 NADP(+) = 7-cyano-7-deazaguanine + 2 NADPH + 3 H(+). It participates in tRNA modification; tRNA-queuosine biosynthesis. Its function is as follows. Catalyzes the NADPH-dependent reduction of 7-cyano-7-deazaguanine (preQ0) to 7-aminomethyl-7-deazaguanine (preQ1). This chain is NADPH-dependent 7-cyano-7-deazaguanine reductase, found in Legionella pneumophila (strain Lens).